The chain runs to 308 residues: CD276 antigen homolog (308 aa).

Positions 1–15 (MAALCLLLLLSLAEA) are cleaved as a signal peptide. Over 16–236 (IDLRVPELPV…VTGQHLSFPP (221 aa)) the chain is Extracellular. The 105-residue stretch at 21–125 (PELPVIGLLD…VQNSSSASVS (105 aa)) folds into the Ig-like V-type domain. Cystine bridges form between C37–C112 and C155–C210. An Ig-like C2-type domain is found at 135–228 (PTLHLEPSEA…DVTHASLTVT (94 aa)). The chain crosses the membrane as a helical span at residues 237–257 (LVLWVTVGLSICLLCLLVALA). Residues 258-308 (CVCRKHLKQTCEEEQENAGNEEHEENGELKTAMQPLKVTSPGEDDDAECLE) are Cytoplasmic-facing. Residues 270 to 308 (EEQENAGNEEHEENGELKTAMQPLKVTSPGEDDDAECLE) are disordered. Residues 299-308 (GEDDDAECLE) are compositionally biased toward acidic residues.

This sequence belongs to the immunoglobulin superfamily. BTN/MOG family.

It is found in the membrane. Functionally, modulates immune responses. The polypeptide is CD276 antigen homolog (cd276) (Xenopus laevis (African clawed frog)).